Consider the following 123-residue polypeptide: Putative iron-sulfur cluster insertion protein ErpA (123 aa).

Cys-51, Cys-115, and Cys-117 together coordinate iron-sulfur cluster.

This sequence belongs to the HesB/IscA family. Homodimer. The cofactor is iron-sulfur cluster.

Required for insertion of 4Fe-4S clusters. In Burkholderia multivorans (strain ATCC 17616 / 249), this protein is Putative iron-sulfur cluster insertion protein ErpA.